A 480-amino-acid polypeptide reads, in one-letter code: Reticulophagy regulator 1 (480 aa).

Basic and acidic residues predominate over residues 1–10 (MASPAPEEHA). Residues 1 to 41 (MASPAPEEHATQGCPATEEQEPRPGVPGEEAGPEGAGPQVE) form a disordered region. The Cytoplasmic portion of the chain corresponds to 1-43 (MASPAPEEHATQGCPATEEQEPRPGVPGEEAGPEGAGPQVEEA). Residues 44–64 (AGRVAAALTWLLGEPVLWLGW) traverse the membrane as a helical segment. Over 65–78 (RADELLSWKRPLRS) the chain is Lumenal. A reticulon homology domain region spans residues 67 to 216 (DELLSWKRPL…LLFAFLCPLF (150 aa)). The chain crosses the membrane as a helical span at residues 79–99 (LLAFLGANLLFWFLALTPWRV). Residues 100-101 (YH) lie on the Cytoplasmic side of the membrane. A helical membrane pass occupies residues 102–122 (LISVMILGRVIMQIIKDMVLS). Over 123 to 191 (RARGAQLWRS…LVCSVCTFFT (69 aa)) the chain is Lumenal. Position 132 is a phosphoserine (Ser132). Ser134 bears the Phosphoserine; by CAMK2B mark. The residue at position 136 (Ser136) is a Phosphoserine. A helical membrane pass occupies residues 192–212 (ILGSYIPGVILSYLLLLFAFL). Residues 213-480 (CPLFKCNDIG…GFLSNLLGGH (268 aa)) are Cytoplasmic-facing. Residues 302–313 (FNLSEGYTPQTD) show a composition bias toward polar residues. A disordered region spans residues 302 to 348 (FNLSEGYTPQTDTSDDLDRPSEEVFSRDLSDFPSLENGAGTNDEDEL). Residues 317–331 (DLDRPSEEVFSRDLS) show a composition bias toward basic and acidic residues. The LIR motif signature appears at 436-441 (DDFELL). Positions 450–480 (ESELGLTQDQGAEAQQSKKSSGFLSNLLGGH) are disordered. Polar residues predominate over residues 454–473 (GLTQDQGAEAQQSKKSSGFL).

Belongs to the RETREG family. In terms of assembly, homooligomer; oligomerization is enhanced following endoplasmic reticulum stress and is mediated by the reticulon homology domain. Interacts with ATG8 family modifier proteins MAP1LC3A, MAP1LC3B, GABARAP, GABARAPL1 and GABARAPL2. Post-translationally, phosphorylation at Ser-134 by CAMK2B enhances oligomerization and membrane scission and reticulophagy activity.

It is found in the golgi apparatus. It localises to the cis-Golgi network membrane. The protein localises to the endoplasmic reticulum membrane. Functionally, endoplasmic reticulum (ER)-anchored autophagy regulator which mediates ER delivery into lysosomes through sequestration into autophagosomes. Promotes membrane remodeling and ER scission via its membrane bending capacity and targets the fragments into autophagosomes via interaction with ATG8 family proteins. Active under basal conditions. Required for collagen quality control in a LIR motif-dependent manner. Required for long-term survival of nociceptive and autonomic ganglion neurons. The sequence is that of Reticulophagy regulator 1 from Rattus norvegicus (Rat).